The primary structure comprises 155 residues: RNA pyrophosphohydrolase (155 aa).

Positions 6 to 148 (GYRANVAIVL…KQDVYRRALT (143 aa)) constitute a Nudix hydrolase domain. Residues 38 to 59 (GGVATGETPLQAMYRELYEEVG) carry the Nudix box motif.

It belongs to the Nudix hydrolase family. RppH subfamily. It depends on a divalent metal cation as a cofactor.

Functionally, accelerates the degradation of transcripts by removing pyrophosphate from the 5'-end of triphosphorylated RNA, leading to a more labile monophosphorylated state that can stimulate subsequent ribonuclease cleavage. The sequence is that of RNA pyrophosphohydrolase from Francisella philomiragia subsp. philomiragia (strain ATCC 25017 / CCUG 19701 / FSC 153 / O#319-036).